A 452-amino-acid chain; its full sequence is MAGYLRVVRSLCRASGSRPAWAPAALTAPTSQEQTRRHYADKRIKVAKPVVEMDGDEMTRIIWQFIKEKLILPHVDIQLKYFDLGLPNRDQTDDQVTIDSALATQKYSVAVKCATITPDEARVEEFKLKKMWKSPNGTIRNILGGTVFREPIICKNIPRLVPGWTKPITIGRHAHGDQYKATDFVADRAGTFKMVFTPKDGSGVKEWEVYNFPAGGVGMGMYNTDESISGFAHSCFQYAIQKKWPLYMSTKNTILKAYDGRFKDIFQEIFDKHYKTDFDKNKIWYEHRLIDDMVAQVLKSSGGFVWACKNYDGDVQSDILAQGFGSLGLMTSVLVCPDGKTIEAEAAHGTVTRHYREHQKGRPTSTNPIASIFAWTRGLEHRGKLDGNQDLIRFAQTLEKVCVETVESGAMTKDLAGCIHGLSNVKLNEHFLNTTDFLDTIKSNLDRALGRQ.

The N-terminal 39 residues, 1-39 (MAGYLRVVRSLCRASGSRPAWAPAALTAPTSQEQTRRHY), are a transit peptide targeting the mitochondrion. N6-acetyllysine is present on residues Lys-45, Lys-48, Lys-67, and Lys-69. N6-acetyllysine; alternate occurs at positions 80 and 106. An N6-succinyllysine; alternate mark is found at Lys-80 and Lys-106. Residues 115 to 117 (TIT) and Arg-122 contribute to the NADP(+) site. Thr-117 lines the substrate pocket. Substrate contacts are provided by residues 134–140 (SPNGTIR) and Arg-149. Lys-155 carries the post-translational modification N6-acetyllysine. Lys-166 carries the N6-acetyllysine; alternate modification. Lys-166 carries the post-translational modification N6-succinyllysine; alternate. Arg-172 contacts substrate. Lys-180 and Lys-193 each carry N6-acetyllysine; alternate. N6-succinyllysine; alternate occurs at positions 180 and 193. An N6-acetyllysine modification is found at Lys-199. Lys-256 is modified (N6-acetyllysine; alternate). At Lys-256 the chain carries N6-succinyllysine; alternate. 4 positions are modified to N6-acetyllysine: Lys-263, Lys-272, Lys-275, and Lys-280. Lys-282 bears the N6-acetyllysine; alternate mark. At Lys-282 the chain carries N6-succinyllysine; alternate. Asp-291 provides a ligand contact to Mn(2+). Lys-299 contributes to the NADP(+) binding site. Asp-314 provides a ligand contact to Mn(2+). NADP(+) contacts are provided by residues 349 to 354 (GTVTRH) and Asn-367. At Lys-384 the chain carries N6-acetyllysine; alternate. At Lys-384 the chain carries N6-succinyllysine; alternate. 3 positions are modified to N6-acetyllysine: Lys-400, Lys-413, and Lys-442.

This sequence belongs to the isocitrate and isopropylmalate dehydrogenases family. As to quaternary structure, homodimer. Mg(2+) serves as cofactor. The cofactor is Mn(2+). In terms of processing, acetylation at Lys-413 dramatically reduces catalytic activity. Deacetylated by SIRT3.

The protein localises to the mitochondrion. It carries out the reaction D-threo-isocitrate + NADP(+) = 2-oxoglutarate + CO2 + NADPH. Its function is as follows. Plays a role in intermediary metabolism and energy production. It may tightly associate or interact with the pyruvate dehydrogenase complex. This chain is Isocitrate dehydrogenase [NADP], mitochondrial (IDH2), found in Macaca fascicularis (Crab-eating macaque).